Reading from the N-terminus, the 303-residue chain is Ribonuclease HIII (303 aa).

Positions 89–303 (WSVLGSDEVG…ANTKKAERLL (215 aa)) constitute an RNase H type-2 domain. Residues D95, E96, and D199 each coordinate a divalent metal cation.

Belongs to the RNase HII family. RnhC subfamily. Requires Mn(2+) as cofactor. It depends on Mg(2+) as a cofactor.

The protein resides in the cytoplasm. It catalyses the reaction Endonucleolytic cleavage to 5'-phosphomonoester.. In terms of biological role, endonuclease that specifically degrades the RNA of RNA-DNA hybrids. The polypeptide is Ribonuclease HIII (Leuconostoc mesenteroides subsp. mesenteroides (strain ATCC 8293 / DSM 20343 / BCRC 11652 / CCM 1803 / JCM 6124 / NCDO 523 / NBRC 100496 / NCIMB 8023 / NCTC 12954 / NRRL B-1118 / 37Y)).